Consider the following 174-residue polypeptide: Pectinesterase inhibitor 12 (174 aa).

The N-terminal stretch at 1-20 (MKFLVSLVIFSLFLNGFATA) is a signal peptide. 2 disulfide bridges follow: C28-C43 and C100-C140. N129 carries N-linked (GlcNAc...) asparagine glycosylation.

It belongs to the PMEI family.

It is found in the secreted. Its subcellular location is the extracellular space. The protein resides in the apoplast. Pectin methylesterase (PME) inhibitor involved in the maintenance of cell wall integrity in response to necrotrophic pathogens. Modulates PME activity and pectin methylesterification during infection by Botrytis cinerea and contributes to resistance against the pathogen. The sequence is that of Pectinesterase inhibitor 12 from Arabidopsis thaliana (Mouse-ear cress).